The chain runs to 266 residues: Metallo-beta-lactamase domain-containing protein 1 (266 aa).

Residues 48–71 are disordered; it reads LPQTRGPASSHRESPRGSGGAEAA. Zn(2+) contacts are provided by H114, H116, D118, H119, H169, D192, and H231. A disordered region spans residues 229–266; sequence PGHGPPFRVLREASQPETEGGGNSQQEPVVGDEEPALH.

It belongs to the metallo-beta-lactamase superfamily. Glyoxalase II family. Homodimer. Zn(2+) serves as cofactor.

Its subcellular location is the cytoplasm. The protein resides in the cytosol. It localises to the nucleus. The enzyme catalyses a ribonucleotidyl-ribonucleotide-RNA + H2O = a 3'-end ribonucleotide-RNA + a 5'-end 5'-phospho-ribonucleoside-RNA + H(+). Endoribonuclease that catalyzes the hydrolysis of histone-coding pre-mRNA 3'-end. Involved in histone pre-mRNA processing during the S-phase of the cell cycle, which is required for entering/progressing through S-phase. Cleaves histone pre-mRNA at a major and a minor cleavage site after the 5'-ACCCA-3' and the 5'-ACCCACA-3' sequence, respectively, and located downstream of the stem-loop. May require the presence of the HDE element located at the histone pre-RNA 3'-end to avoid non-specific cleavage. The protein is Metallo-beta-lactamase domain-containing protein 1 of Homo sapiens (Human).